A 227-amino-acid chain; its full sequence is Cytochrome c oxidase subunit 2 (227 aa).

Residues 1-14 lie on the Mitochondrial intermembrane side of the membrane; sequence MAYPFQLGFQDATS. Residues 15–45 traverse the membrane as a helical segment; that stretch reads PIMEELLHFHDHTLMIVFLISSLVLYIISLM. Residues 46–59 are Mitochondrial matrix-facing; the sequence is LTTKLTHTSTMDAQ. The chain crosses the membrane as a helical span at residues 60–87; sequence EVETIWTILPAIILILIALPSLRILYMM. The Mitochondrial intermembrane segment spans residues 88–227; that stretch reads DEINNPSLTV…YFEKWSASML (140 aa). Residues His-161, Cys-196, Glu-198, Cys-200, His-204, and Met-207 each coordinate Cu cation. Residue Glu-198 coordinates Mg(2+). The residue at position 218 (Tyr-218) is a Phosphotyrosine.

It belongs to the cytochrome c oxidase subunit 2 family. As to quaternary structure, component of the cytochrome c oxidase (complex IV, CIV), a multisubunit enzyme composed of 14 subunits. The complex is composed of a catalytic core of 3 subunits MT-CO1, MT-CO2 and MT-CO3, encoded in the mitochondrial DNA, and 11 supernumerary subunits COX4I, COX5A, COX5B, COX6A, COX6B, COX6C, COX7A, COX7B, COX7C, COX8 and NDUFA4, which are encoded in the nuclear genome. The complex exists as a monomer or a dimer and forms supercomplexes (SCs) in the inner mitochondrial membrane with NADH-ubiquinone oxidoreductase (complex I, CI) and ubiquinol-cytochrome c oxidoreductase (cytochrome b-c1 complex, complex III, CIII), resulting in different assemblies (supercomplex SCI(1)III(2)IV(1) and megacomplex MCI(2)III(2)IV(2)). Found in a complex with TMEM177, COA6, COX18, COX20, SCO1 and SCO2. Interacts with TMEM177 in a COX20-dependent manner. Interacts with COX20. Interacts with COX16. The cofactor is Cu cation.

The protein localises to the mitochondrion inner membrane. It catalyses the reaction 4 Fe(II)-[cytochrome c] + O2 + 8 H(+)(in) = 4 Fe(III)-[cytochrome c] + 2 H2O + 4 H(+)(out). Its function is as follows. Component of the cytochrome c oxidase, the last enzyme in the mitochondrial electron transport chain which drives oxidative phosphorylation. The respiratory chain contains 3 multisubunit complexes succinate dehydrogenase (complex II, CII), ubiquinol-cytochrome c oxidoreductase (cytochrome b-c1 complex, complex III, CIII) and cytochrome c oxidase (complex IV, CIV), that cooperate to transfer electrons derived from NADH and succinate to molecular oxygen, creating an electrochemical gradient over the inner membrane that drives transmembrane transport and the ATP synthase. Cytochrome c oxidase is the component of the respiratory chain that catalyzes the reduction of oxygen to water. Electrons originating from reduced cytochrome c in the intermembrane space (IMS) are transferred via the dinuclear copper A center (CU(A)) of subunit 2 and heme A of subunit 1 to the active site in subunit 1, a binuclear center (BNC) formed by heme A3 and copper B (CU(B)). The BNC reduces molecular oxygen to 2 water molecules using 4 electrons from cytochrome c in the IMS and 4 protons from the mitochondrial matrix. The sequence is that of Cytochrome c oxidase subunit 2 (MT-CO2) from Felis catus (Cat).